The primary structure comprises 292 residues: Protein/nucleic acid deglycase HchA (292 aa).

Residues 1-12 show a composition bias toward polar residues; it reads MSQDVNELSKQP. Residues 1-23 form a disordered region; that stretch reads MSQDVNELSKQPTPDKAEDNAFF. Cysteine 190 acts as the Nucleophile in catalysis.

This sequence belongs to the peptidase C56 family. HchA subfamily.

It localises to the cytoplasm. The enzyme catalyses N(omega)-(1-hydroxy-2-oxopropyl)-L-arginyl-[protein] + H2O = lactate + L-arginyl-[protein] + H(+). The catalysed reaction is N(6)-(1-hydroxy-2-oxopropyl)-L-lysyl-[protein] + H2O = lactate + L-lysyl-[protein] + H(+). It carries out the reaction S-(1-hydroxy-2-oxopropyl)-L-cysteinyl-[protein] + H2O = lactate + L-cysteinyl-[protein] + H(+). It catalyses the reaction N(omega)-(1-hydroxy-2-oxoethyl)-L-arginyl-[protein] + H2O = L-arginyl-[protein] + glycolate + H(+). The enzyme catalyses N(6)-(1-hydroxy-2-oxoethyl)-L-lysyl-[protein] + H2O = glycolate + L-lysyl-[protein] + H(+). The catalysed reaction is S-(1-hydroxy-2-oxoethyl)-L-cysteinyl-[protein] + H2O = glycolate + L-cysteinyl-[protein] + H(+). It carries out the reaction N(2)-(1-hydroxy-2-oxopropyl)-dGTP + H2O = lactate + dGTP + H(+). It catalyses the reaction N(2)-(1-hydroxy-2-oxopropyl)-GTP + H2O = lactate + GTP + H(+). The enzyme catalyses N(2)-(1-hydroxy-2-oxopropyl)-GDP + H2O = lactate + GDP + H(+). The catalysed reaction is N(2)-(1-hydroxy-2-oxopropyl)-GMP + H2O = lactate + GMP + H(+). It carries out the reaction N(2)-(1-hydroxy-2-oxoethyl)-dGTP + H2O = dGTP + glycolate + H(+). It catalyses the reaction N(2)-(1-hydroxy-2-oxoethyl)-GTP + H2O = glycolate + GTP + H(+). The enzyme catalyses N(2)-(1-hydroxy-2-oxoethyl)-GDP + H2O = glycolate + GDP + H(+). The catalysed reaction is N(2)-(1-hydroxy-2-oxoethyl)-GMP + H2O = glycolate + GMP + H(+). It carries out the reaction an N(2)-(1-hydroxy-2-oxopropyl)-guanosine in RNA + H2O = a guanosine in RNA + lactate + H(+). It catalyses the reaction an N(2)-(1-hydroxy-2-oxopropyl)-2'-deoxyguanosine in DNA + H2O = a 2'-deoxyguanosine in DNA + lactate + H(+). The enzyme catalyses an N(2)-(1-hydroxy-2-oxoethyl)-guanosine in RNA + H2O = a guanosine in RNA + glycolate + H(+). The catalysed reaction is an N(2)-(1-hydroxy-2-oxoethyl)-2'-deoxyguanosine in DNA + H2O = a 2'-deoxyguanosine in DNA + glycolate + H(+). Protein and nucleotide deglycase that catalyzes the deglycation of the Maillard adducts formed between amino groups of proteins or nucleotides and reactive carbonyl groups of glyoxals. Thus, functions as a protein deglycase that repairs methylglyoxal- and glyoxal-glycated proteins, and releases repaired proteins and lactate or glycolate, respectively. Deglycates cysteine, arginine and lysine residues in proteins, and thus reactivates these proteins by reversing glycation by glyoxals. Acts on early glycation intermediates (hemithioacetals and aminocarbinols), preventing the formation of Schiff bases and advanced glycation endproducts (AGE). Also functions as a nucleotide deglycase able to repair glycated guanine in the free nucleotide pool (GTP, GDP, GMP, dGTP) and in DNA and RNA. Is thus involved in a major nucleotide repair system named guanine glycation repair (GG repair), dedicated to reversing methylglyoxal and glyoxal damage via nucleotide sanitization and direct nucleic acid repair. Plays an important role in protecting cells from carbonyl stress. The sequence is that of Protein/nucleic acid deglycase HchA from Staphylococcus aureus (strain Mu3 / ATCC 700698).